Consider the following 497-residue polypeptide: Cysteine--tRNA ligase (497 aa).

Cys34 serves as a coordination point for Zn(2+). The 'HIGH' region signature appears at 36–46 (PTVYDFAHIGN). Zn(2+) contacts are provided by Cys243, His268, and Glu272. The 'KMSKS' region motif lies at 301 to 305 (KMAKS). ATP is bound at residue Lys304. The segment at 478–497 (LMDYKDPETGERRTKWEVKR) is disordered. A compositionally biased stretch (basic and acidic residues) spans 480–497 (DYKDPETGERRTKWEVKR).

The protein belongs to the class-I aminoacyl-tRNA synthetase family. In terms of assembly, monomer. Zn(2+) is required as a cofactor.

The protein localises to the cytoplasm. The catalysed reaction is tRNA(Cys) + L-cysteine + ATP = L-cysteinyl-tRNA(Cys) + AMP + diphosphate. This is Cysteine--tRNA ligase from Chelativorans sp. (strain BNC1).